Here is a 481-residue protein sequence, read N- to C-terminus: ATP synthase subunit beta (481 aa).

An ATP-binding site is contributed by 154 to 161 (GGAGVGKT).

It belongs to the ATPase alpha/beta chains family. As to quaternary structure, F-type ATPases have 2 components, CF(1) - the catalytic core - and CF(0) - the membrane proton channel. CF(1) has five subunits: alpha(3), beta(3), gamma(1), delta(1), epsilon(1). CF(0) has three main subunits: a(1), b(2) and c(9-12). The alpha and beta chains form an alternating ring which encloses part of the gamma chain. CF(1) is attached to CF(0) by a central stalk formed by the gamma and epsilon chains, while a peripheral stalk is formed by the delta and b chains.

The protein resides in the cell inner membrane. It catalyses the reaction ATP + H2O + 4 H(+)(in) = ADP + phosphate + 5 H(+)(out). Produces ATP from ADP in the presence of a proton gradient across the membrane. The catalytic sites are hosted primarily by the beta subunits. This is ATP synthase subunit beta from Novosphingobium aromaticivorans (strain ATCC 700278 / DSM 12444 / CCUG 56034 / CIP 105152 / NBRC 16084 / F199).